Here is a 117-residue protein sequence, read N- to C-terminus: uncharacterized protein (117 aa).

A helical transmembrane segment spans residues 10–32; the sequence is VCYLGDIAASGFLNSIATALIAV.

It is found in the membrane. This is an uncharacterized protein from Rickettsia conorii (strain ATCC VR-613 / Malish 7).